Consider the following 245-residue polypeptide: Uridylate kinase (245 aa).

15 to 18 (KLSG) serves as a coordination point for ATP. Residues 23–28 (GDEGFG) form an involved in allosteric activation by GTP region. Glycine 57 lines the UMP pocket. Positions 58 and 62 each coordinate ATP. Residues aspartate 77 and 138–145 (TGNPFCTT) contribute to the UMP site. Threonine 165, tyrosine 171, and aspartate 174 together coordinate ATP.

This sequence belongs to the UMP kinase family. In terms of assembly, homohexamer.

The protein resides in the cytoplasm. It catalyses the reaction UMP + ATP = UDP + ADP. The protein operates within pyrimidine metabolism; CTP biosynthesis via de novo pathway; UDP from UMP (UMPK route): step 1/1. With respect to regulation, allosterically activated by GTP. Inhibited by UTP. Its function is as follows. Catalyzes the reversible phosphorylation of UMP to UDP. The sequence is that of Uridylate kinase from Shewanella sp. (strain W3-18-1).